The chain runs to 123 residues: Large ribosomal subunit protein bL12 (123 aa).

It belongs to the bacterial ribosomal protein bL12 family. In terms of assembly, homodimer. Part of the ribosomal stalk of the 50S ribosomal subunit. Forms a multimeric L10(L12)X complex, where L10 forms an elongated spine to which 2 to 4 L12 dimers bind in a sequential fashion. Binds GTP-bound translation factors.

In terms of biological role, forms part of the ribosomal stalk which helps the ribosome interact with GTP-bound translation factors. Is thus essential for accurate translation. This chain is Large ribosomal subunit protein bL12, found in Mycoplasmopsis agalactiae (strain NCTC 10123 / CIP 59.7 / PG2) (Mycoplasma agalactiae).